The primary structure comprises 522 residues: Sorting nexin-1 (522 aa).

2 disordered regions span residues 1–89 (MASG…QDLF) and 115–142 (SLPPQEAPNSSKHQPTYEELEEEEQEDQ). Phosphoserine is present on residues Ser32 and Ser39. The segment covering 35 to 45 (EAGDSDTEGED) has biased composition (acidic residues). Residues Thr41 and Thr48 each carry the phosphothreonine modification. 2 positions are modified to phosphoserine: Ser58 and Ser72. Residues 60 to 73 (KRTTSLLPINNGSK) show a composition bias toward polar residues. Residues 132–142 (EELEEEEQEDQ) show a composition bias toward acidic residues. Residues 143-272 (FDLTVGITDP…EFLEKEELPR (130 aa)) form the PX domain. Residues Arg186, Ser188, and Lys214 each contribute to the a 1,2-diacyl-sn-glycero-3-phospho-(1D-myo-inositol-3-phosphate) site. Ser188 is subject to Phosphoserine. Lys237 bears the N6-acetyllysine mark. Arg238 provides a ligand contact to a 1,2-diacyl-sn-glycero-3-phospho-(1D-myo-inositol-3-phosphate). Phosphoserine is present on Ser280. The tract at residues 281-298 (GAGLLKMFNKATDAVSKM) is membrane-binding amphipathic helix. Residues 302-522 (MNESDIWFEE…AFLPEAKAIS (221 aa)) form the BAR domain.

The protein belongs to the sorting nexin family. As to quaternary structure, predominantly forms heterodimers with BAR domain-containing sorting nexins SNX5, SNX6 and SNX32; can self-associate to form homodimers. The heterodimers are proposed to self-assemble into helical arrays on the membrane to stabilize and expand local membrane curvature underlying endosomal tubule formation. Thought to be a component of the originally described retromer complex (also called SNX-BAR retromer) which is a pentamer containing the heterotrimeric retromer cargo-selective complex (CSC), also described as vacuolar protein sorting subcomplex (VPS) and a heterodimeric membrane-deforming subcomplex formed between SNX1 or SNX2 and SNX5 or SNX6 (also called SNX-BAR subcomplex); the respective CSC and SNX-BAR subcomplexes associate with low affinity. Interacts with SNX5, SNX6, SNX32, VPS26A, VPS29, VPS35, DRD5, DENND5A, KALRN, RHOG (GDP-bound form). The interaction with SNX2 is reported controversially. Interacts with DNAJC13; prevented by presence of HGS. Interacts with HGS.

The protein resides in the endosome membrane. It is found in the golgi apparatus. Its subcellular location is the trans-Golgi network membrane. The protein localises to the early endosome membrane. It localises to the cell projection. The protein resides in the lamellipodium. Its function is as follows. Involved in several stages of intracellular trafficking. Interacts with membranes containing phosphatidylinositol 3-phosphate (PtdIns(3P)) or phosphatidylinositol 3,5-bisphosphate (PtdIns(3,5)P2). Acts in part as component of the retromer membrane-deforming SNX-BAR subcomplex. The SNX-BAR retromer mediates retrograde transport of cargo proteins from endosomes to the trans-Golgi network (TGN) and is involved in endosome-to-plasma membrane transport for cargo protein recycling. The SNX-BAR subcomplex functions to deform the donor membrane into a tubular profile called endosome-to-TGN transport carrier (ETC). Can sense membrane curvature and has in vitro vesicle-to-membrane remodeling activity. Involved in retrograde endosome-to-TGN transport of lysosomal enzyme receptors (IGF2R, M6PR and SORT1). Plays a role in targeting ligand-activated EGFR to the lysosomes for degradation after endocytosis from the cell surface and release from the Golgi. Involvement in retromer-independent endocytic trafficking of P2RY1 and lysosomal degradation of protease-activated receptor-1/F2R. Promotes KALRN- and RHOG-dependent but retromer-independent membrane remodeling such as lamellipodium formation; the function is dependent on GEF activity of KALRN. Required for endocytosis of DRD5 upon agonist stimulation but not for basal receptor trafficking. The protein is Sorting nexin-1 (SNX1) of Macaca fascicularis (Crab-eating macaque).